The primary structure comprises 132 residues: Small ribosomal subunit protein uS8 (132 aa).

This sequence belongs to the universal ribosomal protein uS8 family. As to quaternary structure, part of the 30S ribosomal subunit. Contacts proteins S5 and S12.

Functionally, one of the primary rRNA binding proteins, it binds directly to 16S rRNA central domain where it helps coordinate assembly of the platform of the 30S subunit. This Alkaliphilus oremlandii (strain OhILAs) (Clostridium oremlandii (strain OhILAs)) protein is Small ribosomal subunit protein uS8.